Consider the following 158-residue polypeptide: Cyclic pyranopterin monophosphate synthase (158 aa).

Residues 74-76 (MCH) and 112-113 (ME) contribute to the substrate site. Residue D127 is part of the active site.

Belongs to the MoaC family. Homohexamer; trimer of dimers.

It catalyses the reaction (8S)-3',8-cyclo-7,8-dihydroguanosine 5'-triphosphate = cyclic pyranopterin phosphate + diphosphate. Its pathway is cofactor biosynthesis; molybdopterin biosynthesis. Catalyzes the conversion of (8S)-3',8-cyclo-7,8-dihydroguanosine 5'-triphosphate to cyclic pyranopterin monophosphate (cPMP). In Helicobacter pylori (strain G27), this protein is Cyclic pyranopterin monophosphate synthase.